Consider the following 156-residue polypeptide: Small ribosomal subunit protein uS7 (156 aa).

It belongs to the universal ribosomal protein uS7 family. In terms of assembly, part of the 30S ribosomal subunit. Contacts proteins S9 and S11.

Its function is as follows. One of the primary rRNA binding proteins, it binds directly to 16S rRNA where it nucleates assembly of the head domain of the 30S subunit. Is located at the subunit interface close to the decoding center, probably blocks exit of the E-site tRNA. The polypeptide is Small ribosomal subunit protein uS7 (Campylobacter curvus (strain 525.92)).